A 418-amino-acid chain; its full sequence is Serine hydroxymethyltransferase (418 aa).

(6S)-5,6,7,8-tetrahydrofolate is bound by residues Leu-120 and 124 to 126 (GHL). At Lys-229 the chain carries N6-(pyridoxal phosphate)lysine. Residue 353–355 (SPF) participates in (6S)-5,6,7,8-tetrahydrofolate binding.

This sequence belongs to the SHMT family. Homodimer. Pyridoxal 5'-phosphate serves as cofactor.

The protein localises to the cytoplasm. It catalyses the reaction (6R)-5,10-methylene-5,6,7,8-tetrahydrofolate + glycine + H2O = (6S)-5,6,7,8-tetrahydrofolate + L-serine. It functions in the pathway one-carbon metabolism; tetrahydrofolate interconversion. It participates in amino-acid biosynthesis; glycine biosynthesis; glycine from L-serine: step 1/1. Its function is as follows. Catalyzes the reversible interconversion of serine and glycine with tetrahydrofolate (THF) serving as the one-carbon carrier. This reaction serves as the major source of one-carbon groups required for the biosynthesis of purines, thymidylate, methionine, and other important biomolecules. Also exhibits THF-independent aldolase activity toward beta-hydroxyamino acids, producing glycine and aldehydes, via a retro-aldol mechanism. The polypeptide is Serine hydroxymethyltransferase (Psychrobacter cryohalolentis (strain ATCC BAA-1226 / DSM 17306 / VKM B-2378 / K5)).